We begin with the raw amino-acid sequence, 403 residues long: GPI mannosyltransferase 1 (403 aa).

Residues 1 to 4 (MTGE) are Cytoplasmic-facing. A helical transmembrane segment spans residues 5–25 (EWGLTVLSFLVRVGFFLFGIY). Residues 26 to 78 (QDANFKVRYTDIDYFVFHDAAKYVYEGKSPYARDTYRYTPLLSWLLVPNHYFG) lie on the Lumenal side of the membrane. A helical membrane pass occupies residues 79 to 99 (WFHLGKVIFVIFDLVTGLIIM). At 100-110 (KLLNQAISRKR) the chain is on the cytoplasmic side. Residues 111–131 (ALILESIWLLNPMVITISTRG) traverse the membrane as a helical segment. N132 is a topological domain (lumenal). A helical membrane pass occupies residues 133–149 (AESVLCCLIMFTLFFLQ). The Cytoplasmic segment spans residues 150 to 160 (KSRYTLAGILY). A helical transmembrane segment spans residues 161 to 181 (GLSIHFKIYPIIYCIPIAIFI). Topologically, residues 182 to 193 (YYNKRNQGPRTQ) are lumenal. A helical membrane pass occupies residues 194 to 214 (LTSLLNIGLSTLTTLLGCGWA). The Cytoplasmic portion of the chain corresponds to 215-266 (MYKIYGYEFLDQAYLYHLYRTDHRHNFSVWNMLLYLDSANKENGESNLSRYA). The chain crosses the membrane as a helical span at residues 267–287 (FVPQLLLVLVTGCLEWWNPTF). The Lumenal portion of the chain corresponds to 288 to 310 (DNLLRVLFVQTFAFVTYNKVCTS). A helical transmembrane segment spans residues 311 to 331 (QYFVWYLIFLPFYLSRTHIGW). At 332–334 (KKG) the chain is on the cytoplasmic side. Residues 335-355 (LLMATLWVGTQGIWLSQGYYL) traverse the membrane as a helical segment. Residues 356–361 (EFEGKN) are Lumenal-facing. The helical transmembrane segment at 362-382 (VFYPGLFIASVLFFVTNVWLL) threads the bilayer. The Cytoplasmic segment spans residues 383–403 (GQFITDIKIPTQPTVSNKKNN).

The protein belongs to the PIGM family.

The protein localises to the endoplasmic reticulum membrane. It functions in the pathway glycolipid biosynthesis; glycosylphosphatidylinositol-anchor biosynthesis. Functionally, mannosyltransferase involved in glycosylphosphatidylinositol-anchor biosynthesis. Transfers the first alpha-1,4-mannose to GlcN-acyl-PI during GPI precursor assembly. Required for cell wall integrity. The chain is GPI mannosyltransferase 1 (GPI14) from Saccharomyces cerevisiae (strain ATCC 204508 / S288c) (Baker's yeast).